Here is a 673-residue protein sequence, read N- to C-terminus: DNA ligase (673 aa).

Residues 32–36 (DAEYD), 81–82 (SL), and Glu-113 contribute to the NAD(+) site. Residue Lys-115 is the N6-AMP-lysine intermediate of the active site. The NAD(+) site is built by Arg-136, Glu-173, Lys-290, and Lys-314. Zn(2+) contacts are provided by Cys-408, Cys-411, Cys-426, and Cys-432. Positions 595 to 673 (EIDSPFAGKT…EAEMIRLLGA (79 aa)) constitute a BRCT domain.

The protein belongs to the NAD-dependent DNA ligase family. LigA subfamily. Mg(2+) serves as cofactor. Mn(2+) is required as a cofactor.

The enzyme catalyses NAD(+) + (deoxyribonucleotide)n-3'-hydroxyl + 5'-phospho-(deoxyribonucleotide)m = (deoxyribonucleotide)n+m + AMP + beta-nicotinamide D-nucleotide.. Its function is as follows. DNA ligase that catalyzes the formation of phosphodiester linkages between 5'-phosphoryl and 3'-hydroxyl groups in double-stranded DNA using NAD as a coenzyme and as the energy source for the reaction. It is essential for DNA replication and repair of damaged DNA. The sequence is that of DNA ligase from Serratia proteamaculans (strain 568).